The primary structure comprises 121 residues: Large ribosomal subunit protein bL20 (121 aa).

The protein belongs to the bacterial ribosomal protein bL20 family.

In terms of biological role, binds directly to 23S ribosomal RNA and is necessary for the in vitro assembly process of the 50S ribosomal subunit. It is not involved in the protein synthesizing functions of that subunit. The chain is Large ribosomal subunit protein bL20 from Koribacter versatilis (strain Ellin345).